The primary structure comprises 512 residues: Eukaryotic translation initiation factor 3 subunit L (512 aa).

A PCI domain is found at 291 to 477; sequence DAFRLFESIL…GERQFTDSVD (187 aa).

Belongs to the eIF-3 subunit L family. Component of the eukaryotic translation initiation factor 3 (eIF-3) complex.

It is found in the cytoplasm. Its function is as follows. Component of the eukaryotic translation initiation factor 3 (eIF-3) complex, which is involved in protein synthesis of a specialized repertoire of mRNAs and, together with other initiation factors, stimulates binding of mRNA and methionyl-tRNAi to the 40S ribosome. The eIF-3 complex specifically targets and initiates translation of a subset of mRNAs involved in cell proliferation. The chain is Eukaryotic translation initiation factor 3 subunit L from Monosiga brevicollis (Choanoflagellate).